A 475-amino-acid chain; its full sequence is Eukaryotic translation initiation factor 2 subunit 3 (475 aa).

A tr-type G domain is found at Gln-38 to Arg-247. Residues Gly-47–Ser-54 are G1. Residue Ala-50–Thr-55 coordinates GTP. The tract at residues Asn-75–Lys-79 is G2. The G3 stretch occupies residues Asp-133–Gly-136. GTP-binding positions include Asn-189–Asp-192 and Ser-224–Gln-226. Positions Asn-189–Asp-192 are G4. The interval Ser-224–Gln-226 is G5. Residues Gly-456–Leu-468 are interacts with CDC123.

The protein belongs to the TRAFAC class translation factor GTPase superfamily. Classic translation factor GTPase family. EIF2G subfamily. In terms of assembly, eukaryotic translation initiation factor 2 eIF2 is a heterotrimeric complex composed of an alpha, a beta and a gamma subunit. The factors eIF-1, eIF-2, eIF-3, TIF5/eIF-5 and methionyl-tRNAi form a multifactor complex (MFC) that may bind to the 40S ribosome.

Its subcellular location is the cytoplasm. It localises to the cytosol. It catalyses the reaction GTP + H2O = GDP + phosphate + H(+). In terms of biological role, as a subunit of eukaryotic initiation factor 2 eIF2, involved in the early steps of protein synthesis. In the presence of GTP, eIF-2 forms a ternary complex with initiator tRNA Met-tRNAi and then recruits the 40S ribosomal complex and initiation factors eIF-1, eIF-1A and eIF-3 to form the 43S pre-initiation complex (43S PIC), a step that determines the rate of protein translation. The 43S PIC binds to mRNA and scans downstream to the initiation codon, where it forms a 48S initiation complex by codon-anticodon base pairing. This leads to the displacement of eIF-1 to allow GTPase-activating protein (GAP) eIF-5-mediated hydrolysis of eIF2-bound GTP. Hydrolysis of GTP and release of Pi, which makes GTP hydrolysis irreversible, causes the release of the eIF-2-GDP binary complex from the 40S subunit, an event that is essential for the subsequent joining of the 60S ribosomal subunit to form an elongation-competent 80S ribosome. In order for eIF-2 to recycle and catalyze another round of initiation, the GDP bound to eIF-2 must be exchanged with GTP by way of a reaction catalyzed by GDP-GTP exchange factor (GEF) eIF-2B. This is Eukaryotic translation initiation factor 2 subunit 3 from Drosophila melanogaster (Fruit fly).